The sequence spans 721 residues: bZIP transcription factor 17 (721 aa).

Disordered regions lie at residues 1–51 and 87–232; these read MAEP…LMSD and QEQF…EKKR. Residues 1 to 366 lie on the Cytoplasmic side of the membrane; the sequence is MAEPITKEQP…KSEAKTKKVA (366 aa). The segment covering 9 to 25 has biased composition (pro residues); it reads QPPPPAPDPNSTYPPPS. A compositionally biased stretch (basic and acidic residues) spans 125–141; that stretch reads ESPRDSDDRCSGADHNL. Residues 146-170 show a composition bias toward polar residues; sequence PLSSQGSGNCGSDVSEATNESSPKS. Residues 204–216 show a composition bias toward basic and acidic residues; it reads DESRNSKYRRSGE. The bZIP domain maps to 228-288; it reads DEKKRARLMR…AENATLRQQL (61 aa). Residues 230–261 are basic motif; it reads KKRARLMRNRESAQLSRQRKKHYVEELEEKVR. The segment at 267–274 is leucine-zipper; it reads ITDLNGKI. The interval 337–359 is disordered; that stretch reads PRLKPQNTLGTSKAKKSESKKSE. A helical membrane pass occupies residues 367 to 387; sequence SISFLGLLFCLFLFGALAPIV. Topologically, residues 388 to 721 are lumenal; the sequence is NVNYGGISGA…RSGAPHLVTT (334 aa). Residues 422-436 are compositionally biased toward polar residues; sequence TSRSGAGTGVSNSNG. The tract at residues 422 to 462 is disordered; that stretch reads TSRSGAGTGVSNSNGMHRGRDSDRGARKNISATESSVTPGN. Residues Asn450, Asn462, Asn609, and Asn617 are each glycosylated (N-linked (GlcNAc...) asparagine). Polar residues predominate over residues 451–462; it reads ISATESSVTPGN. An RRIL cleavage motif motif is present at residues 627 to 630; that stretch reads RRIL. Residues Asn643 and Asn651 are each glycosylated (N-linked (GlcNAc...) asparagine).

Belongs to the bZIP family. In terms of assembly, interacts with BZIP28.

It localises to the endoplasmic reticulum membrane. Its subcellular location is the golgi apparatus membrane. The protein localises to the nucleus. Its function is as follows. Transcriptional activator involved in salt and osmotic stress responses. Functions as a stress sensor and transducer in a signaling pathway that resembles an ER stress response. Following salt stress, BZIP17 is cleaved by SBT6.1 (S1P) and S2P at the C-terminus and the N-terminal bZIP component is translocated to the nucleus, where it activates the expression of salt stress response genes. Functions as a stress sensor and transducer in ER stress signaling pathway. ER stress induces proteolysis of BZIP17 by SBT6.1 (S1P) and S2P, and the N-terminal bZIP component is translocated to the nucleus, where it activates the expression and production of ER chaperones, as well as protein involved in brassinosteroid (BR) signaling, which is required for stress acclimation and growth. The sequence is that of bZIP transcription factor 17 from Arabidopsis thaliana (Mouse-ear cress).